Reading from the N-terminus, the 131-residue chain is Translation initiation factor 5A (131 aa).

Residue Lys-37 is modified to Hypusine.

The protein belongs to the eIF-5A family.

It is found in the cytoplasm. Functionally, functions by promoting the formation of the first peptide bond. This is Translation initiation factor 5A (eIF5A) from Methanococcus maripaludis (strain C7 / ATCC BAA-1331).